The following is a 387-amino-acid chain: 3-ketoacyl-CoA thiolase (387 aa).

C91 functions as the Acyl-thioester intermediate in the catalytic mechanism. Active-site proton acceptor residues include H343 and C373.

Belongs to the thiolase-like superfamily. Thiolase family. In terms of assembly, heterotetramer of two alpha chains (FadB) and two beta chains (FadA).

It localises to the cytoplasm. It catalyses the reaction an acyl-CoA + acetyl-CoA = a 3-oxoacyl-CoA + CoA. Its pathway is lipid metabolism; fatty acid beta-oxidation. Functionally, catalyzes the final step of fatty acid oxidation in which acetyl-CoA is released and the CoA ester of a fatty acid two carbons shorter is formed. This is 3-ketoacyl-CoA thiolase from Vibrio vulnificus (strain YJ016).